We begin with the raw amino-acid sequence, 331 residues long: DNA-directed RNA polymerase subunit alpha (331 aa).

The tract at residues 1–226 (MLIAQRPTLT…ELFGLARELN (226 aa)) is alpha N-terminal domain (alpha-NTD). Residues 243–331 (LSSELSMPIE…SYDEDETTTN (89 aa)) are alpha C-terminal domain (alpha-CTD).

This sequence belongs to the RNA polymerase alpha chain family. Homodimer. The RNAP catalytic core consists of 2 alpha, 1 beta, 1 beta' and 1 omega subunit. When a sigma factor is associated with the core the holoenzyme is formed, which can initiate transcription.

It carries out the reaction RNA(n) + a ribonucleoside 5'-triphosphate = RNA(n+1) + diphosphate. DNA-dependent RNA polymerase catalyzes the transcription of DNA into RNA using the four ribonucleoside triphosphates as substrates. This is DNA-directed RNA polymerase subunit alpha from Clavibacter sepedonicus (Clavibacter michiganensis subsp. sepedonicus).